The sequence spans 299 residues: Bifunctional methyltransferase-like/endonuclease (299 aa).

Residues 1–80 (MLSSKLLDIN…NLIVSPMQKA (80 aa)) are probable methylated-DNA--protein-cysteine methyltransferase-like. Residues 81-299 (LLEKEVKIIG…GRGDSNPGRD (219 aa)) are endonuclease V. 2 residues coordinate Mg(2+): D135 and N197.

This sequence in the N-terminal section; belongs to the MGMT family. It in the C-terminal section; belongs to the endonuclease V family. Mg(2+) serves as cofactor.

It is found in the cytoplasm. The catalysed reaction is Endonucleolytic cleavage at apurinic or apyrimidinic sites to products with a 5'-phosphate.. Functionally, DNA repair enzyme involved in the repair of deaminated bases. Selectively cleaves double-stranded DNA at the second phosphodiester bond 3' to a deoxyinosine leaving behind the intact lesion on the nicked DNA. In Nanoarchaeum equitans (strain Kin4-M), this protein is Bifunctional methyltransferase-like/endonuclease.